Consider the following 100-residue polypeptide: MIENILIIGAFLFCIGTYGLITSKNMIKVLMCLELMFNSVNINLVAFSNFFDSESIKGQVFAVFIIAIAAAEAAIGLAIVFALYRNRRSTKVNQFNLLKW.

3 consecutive transmembrane segments (helical) span residues 1 to 21, 27 to 47, and 61 to 81; these read MIENILIIGAFLFCIGTYGLI, IKVLMCLELMFNSVNINLVAF, and FAVFIIAIAAAEAAIGLAIVF.

Belongs to the complex I subunit 4L family. In terms of assembly, NDH is composed of at least 16 different subunits, 5 of which are encoded in the nucleus.

It is found in the plastid. Its subcellular location is the chloroplast thylakoid membrane. The catalysed reaction is a plastoquinone + NADH + (n+1) H(+)(in) = a plastoquinol + NAD(+) + n H(+)(out). The enzyme catalyses a plastoquinone + NADPH + (n+1) H(+)(in) = a plastoquinol + NADP(+) + n H(+)(out). Its function is as follows. NDH shuttles electrons from NAD(P)H:plastoquinone, via FMN and iron-sulfur (Fe-S) centers, to quinones in the photosynthetic chain and possibly in a chloroplast respiratory chain. The immediate electron acceptor for the enzyme in this species is believed to be plastoquinone. Couples the redox reaction to proton translocation, and thus conserves the redox energy in a proton gradient. This is NAD(P)H-quinone oxidoreductase subunit 4L, chloroplastic from Chaetosphaeridium globosum (Charophycean green alga).